Reading from the N-terminus, the 348-residue chain is Uroporphyrinogen decarboxylase (348 aa).

Substrate contacts are provided by residues 27 to 31, phenylalanine 46, aspartate 76, tyrosine 152, serine 207, and histidine 320; that span reads RQAGR.

The protein belongs to the uroporphyrinogen decarboxylase family. In terms of assembly, homodimer.

It localises to the cytoplasm. The catalysed reaction is uroporphyrinogen III + 4 H(+) = coproporphyrinogen III + 4 CO2. It functions in the pathway porphyrin-containing compound metabolism; protoporphyrin-IX biosynthesis; coproporphyrinogen-III from 5-aminolevulinate: step 4/4. Functionally, catalyzes the decarboxylation of four acetate groups of uroporphyrinogen-III to yield coproporphyrinogen-III. This Bacillus mycoides (strain KBAB4) (Bacillus weihenstephanensis) protein is Uroporphyrinogen decarboxylase.